The primary structure comprises 310 residues: MKLLTTKITRTAITVVLVVLAFIAIFRAWSFYTESPWTRDARFSADVVAIAPDVAGLITSVDVHDNQLVKKDQVLFTIDQPRYQKALEEAEADVAYYQALANEKRREAGRRNQLGVQAMSREEIDQANNVLQTVLHQLAKAEATRDLAKLDLQRTVIRAPADGWVTNLNVYTGEFITRGSTAVALVKQNSFYVQAYMEETKLEGVRPGFRVEITPLGSNNVLHGTVDSVSAGVTNASSTRDAKGMATVDSNLEWVRLAQRVPVRIRLDKQPGNLYPAGTTATVVVTGERDRDRSQESAFNKLMHRLREFG.

A helical transmembrane segment spans residues alanine 12–tyrosine 32.

The protein belongs to the membrane fusion protein (MFP) (TC 8.A.1) family.

Its subcellular location is the cell inner membrane. In terms of biological role, forms an efflux pump with AaeB. The sequence is that of p-hydroxybenzoic acid efflux pump subunit AaeA from Cronobacter sakazakii (strain ATCC BAA-894) (Enterobacter sakazakii).